Reading from the N-terminus, the 192-residue chain is UPF0149 protein YgfB (192 aa).

This sequence belongs to the UPF0149 family.

The polypeptide is UPF0149 protein YgfB (Escherichia coli O127:H6 (strain E2348/69 / EPEC)).